A 282-amino-acid chain; its full sequence is Bifunctional protein FolD (282 aa).

Residues G165 to S167 and I231 contribute to the NADP(+) site.

This sequence belongs to the tetrahydrofolate dehydrogenase/cyclohydrolase family. As to quaternary structure, homodimer.

It carries out the reaction (6R)-5,10-methylene-5,6,7,8-tetrahydrofolate + NADP(+) = (6R)-5,10-methenyltetrahydrofolate + NADPH. The enzyme catalyses (6R)-5,10-methenyltetrahydrofolate + H2O = (6R)-10-formyltetrahydrofolate + H(+). Its pathway is one-carbon metabolism; tetrahydrofolate interconversion. Functionally, catalyzes the oxidation of 5,10-methylenetetrahydrofolate to 5,10-methenyltetrahydrofolate and then the hydrolysis of 5,10-methenyltetrahydrofolate to 10-formyltetrahydrofolate. This Francisella tularensis subsp. tularensis (strain FSC 198) protein is Bifunctional protein FolD.